Consider the following 473-residue polypeptide: Ribulose bisphosphate carboxylase large chain 1 (473 aa).

Positions 116 and 166 each coordinate substrate. Residue Lys168 is the Proton acceptor of the active site. Lys170 is a substrate binding site. Residues Lys194, Asp196, and Glu197 each contribute to the Mg(2+) site. Lys194 bears the N6-carboxylysine mark. The active-site Proton acceptor is the His287. Substrate is bound by residues Arg288, His320, and Ser372.

It belongs to the RuBisCO large chain family. Type I subfamily. As to quaternary structure, heterohexadecamer of 8 large chains and 8 small chains. Requires Mg(2+) as cofactor.

The catalysed reaction is 2 (2R)-3-phosphoglycerate + 2 H(+) = D-ribulose 1,5-bisphosphate + CO2 + H2O. The enzyme catalyses D-ribulose 1,5-bisphosphate + O2 = 2-phosphoglycolate + (2R)-3-phosphoglycerate + 2 H(+). Functionally, ruBisCO catalyzes two reactions: the carboxylation of D-ribulose 1,5-bisphosphate, the primary event in carbon dioxide fixation, as well as the oxidative fragmentation of the pentose substrate. Both reactions occur simultaneously and in competition at the same active site. This chain is Ribulose bisphosphate carboxylase large chain 1, found in Nitrobacter winogradskyi (strain ATCC 25391 / DSM 10237 / CIP 104748 / NCIMB 11846 / Nb-255).